Here is a 251-residue protein sequence, read N- to C-terminus: MLAKRIIPCLDIKDGQTVKGTNFVNLRQAGDPVELGRAYSEQGADELVFLDITASHEGRKTFTELVKRIAANINIPFTVGGGINELSDVDRLLNAGADKISINSSAIRNPQLIDDIAKNFGSQVCVLAVDAKQTENGWKCYLNGGRIETDKELLAWTKEAQERGAGEILFTSMNHDGVKTGYANEALASLADQLSIPVIASGGAGLKEHFRDAFLVGKADAALAASVFHFGEIKIPELKSYLCGEGITIRG.

Catalysis depends on residues aspartate 11 and aspartate 130.

Belongs to the HisA/HisF family. Heterodimer of HisH and HisF.

It is found in the cytoplasm. The catalysed reaction is 5-[(5-phospho-1-deoxy-D-ribulos-1-ylimino)methylamino]-1-(5-phospho-beta-D-ribosyl)imidazole-4-carboxamide + L-glutamine = D-erythro-1-(imidazol-4-yl)glycerol 3-phosphate + 5-amino-1-(5-phospho-beta-D-ribosyl)imidazole-4-carboxamide + L-glutamate + H(+). The protein operates within amino-acid biosynthesis; L-histidine biosynthesis; L-histidine from 5-phospho-alpha-D-ribose 1-diphosphate: step 5/9. Functionally, IGPS catalyzes the conversion of PRFAR and glutamine to IGP, AICAR and glutamate. The HisF subunit catalyzes the cyclization activity that produces IGP and AICAR from PRFAR using the ammonia provided by the HisH subunit. This chain is Imidazole glycerol phosphate synthase subunit HisF, found in Bacteroides thetaiotaomicron (strain ATCC 29148 / DSM 2079 / JCM 5827 / CCUG 10774 / NCTC 10582 / VPI-5482 / E50).